The primary structure comprises 357 residues: D-alanine--D-alanine ligase (357 aa).

Residues 134 to 339 enclose the ATP-grasp domain; the sequence is KQLFEHRGLP…YPDLIAKLID (206 aa). 167–222 serves as a coordination point for ATP; it reads NDKLTYPVFVKPANLGSSVGISKCNNEEELKSGIAEAFQFDRKLVIEQGINAREIE. Positions 293, 306, and 308 each coordinate Mg(2+).

It belongs to the D-alanine--D-alanine ligase family. Mg(2+) is required as a cofactor. It depends on Mn(2+) as a cofactor.

The protein localises to the cytoplasm. The catalysed reaction is 2 D-alanine + ATP = D-alanyl-D-alanine + ADP + phosphate + H(+). The protein operates within cell wall biogenesis; peptidoglycan biosynthesis. Functionally, cell wall formation. The polypeptide is D-alanine--D-alanine ligase (Staphylococcus epidermidis (strain ATCC 35984 / DSM 28319 / BCRC 17069 / CCUG 31568 / BM 3577 / RP62A)).